We begin with the raw amino-acid sequence, 190 residues long: Putative manganese efflux pump MntP (190 aa).

6 helical membrane passes run 3 to 23 (MSAT…ASIG), 41 to 61 (LIFG…GFFA), 62 to 82 (SQYI…ILGG), 105 to 127 (LALL…VGLA), 143 to 163 (ATMI…PILG), and 168 to 188 (VMGG…HLGY).

Belongs to the MntP (TC 9.B.29) family.

Its subcellular location is the cell inner membrane. Functionally, probably functions as a manganese efflux pump. The sequence is that of Putative manganese efflux pump MntP from Pectobacterium carotovorum subsp. carotovorum (strain PC1).